The sequence spans 497 residues: Xylooligosaccharide oxidase (497 aa).

The N-terminal stretch at 1–16 (MHLLPLTVSATAVVSA) is a signal peptide. Cys30 and Cys79 form a disulfide bridge. N-linked (GlcNAc...) asparagine glycans are attached at residues Asn42 and Asn117. Residues 57-230 (LPYTPAAIAK…ASFRFKTFAA (174 aa)) enclose the FAD-binding PCMH-type domain. The segment at residues 94–155 (HSYASFGLGG…GKRAFSHGTC (62 aa)) is a cross-link (6-(S-cysteinyl)-8alpha-(pros-histidyl)-FAD (His-Cys)). Thr154 provides a ligand contact to substrate. Residues Asn192, Asn233, and Asn245 are each glycosylated (N-linked (GlcNAc...) asparagine). Arg272 contributes to the substrate binding site. Asn289 and Asn307 each carry an N-linked (GlcNAc...) asparagine glycan. Substrate contacts are provided by Glu412 and Tyr451.

The protein belongs to the oxygen-dependent FAD-linked oxidoreductase family. It depends on FAD as a cofactor. Post-translationally, the FAD cofactor is bound via a bicovalent 6-S-cysteinyl, 8alpha-N1-histidyl FAD linkage.

The protein localises to the secreted. The catalysed reaction is D-xylobiose + O2 = D-xylobiono-1,5-lactone + H2O2. It carries out the reaction D-xylotriose + O2 = D-xylotriono-1,5-lactone + H2O2. It catalyses the reaction D-xylotetraose + O2 = D-xylotetraono-1,5-lactone + H2O2. Catalyzes the selective oxidation of C1 hydroxyl moieties on mono-, oligo- and polysaccharides with concomitant reduction of molecular oxygen to hydrogen peroxide. This results in the formation of the corresponding lactones, which typically undergo spontaneous hydrolysis. Xylooligosaccharide oxidase is able to oxidize a variety of substrates including D-xylose, D-cellobiose, lactose and arabinose. The enzyme acts primarily on xylooligosaccharides, indicating that it prefers pentose-based oligosaccharides over hexose-based oligosaccharides. The chain is Xylooligosaccharide oxidase from Thermothelomyces thermophilus (strain ATCC 42464 / BCRC 31852 / DSM 1799) (Sporotrichum thermophile).